The primary structure comprises 58 residues: UPF0339 protein TDE_0826 (58 aa).

This sequence belongs to the UPF0339 family.

The sequence is that of UPF0339 protein TDE_0826 from Treponema denticola (strain ATCC 35405 / DSM 14222 / CIP 103919 / JCM 8153 / KCTC 15104).